The following is a 186-amino-acid chain: UPF0301 protein Nmul_A2478 (186 aa).

It belongs to the UPF0301 (AlgH) family.

This is UPF0301 protein Nmul_A2478 from Nitrosospira multiformis (strain ATCC 25196 / NCIMB 11849 / C 71).